A 361-amino-acid polypeptide reads, in one-letter code: Ribosomal RNA large subunit methyltransferase M (361 aa).

S-adenosyl-L-methionine contacts are provided by residues S187, 220-223 (CPGG), D239, D259, and D276. K305 serves as the catalytic Proton acceptor.

It belongs to the class I-like SAM-binding methyltransferase superfamily. RNA methyltransferase RlmE family. RlmM subfamily. In terms of assembly, monomer.

The protein resides in the cytoplasm. It catalyses the reaction cytidine(2498) in 23S rRNA + S-adenosyl-L-methionine = 2'-O-methylcytidine(2498) in 23S rRNA + S-adenosyl-L-homocysteine + H(+). In terms of biological role, catalyzes the 2'-O-methylation at nucleotide C2498 in 23S rRNA. In Shewanella sp. (strain W3-18-1), this protein is Ribosomal RNA large subunit methyltransferase M.